Reading from the N-terminus, the 387-residue chain is Norsolorinic acid reductase stcV (387 aa).

D69 is an NADP(+) binding site. Y74 functions as the Proton donor in the catalytic mechanism. Residue H148 coordinates substrate. Residues 178 to 179, Q204, 233 to 243, and 301 to 309 contribute to the NADP(+) site; these read SD, GALGRGQYKSA, and RTVEQLEAN.

The protein belongs to the aldo/keto reductase family. Aldo/keto reductase 2 subfamily.

It functions in the pathway mycotoxin biosynthesis; sterigmatocystin biosynthesis. Norsolorinic acid reductase; part of the gene cluster that mediates the biosynthesis of sterigmatocystin (ST), a polyketide-derived furanocoumarin which is part of the most toxic and carcinogenic compounds among the known mycotoxins. The first step in the biosynthesis of sterigmatocystin is the production of hexanoate by the fatty acid synthase (FAS) units stcJ and stcK. The polyketide backbone is assembled by the non-reducing polyketide synthase stcA by condensation of the starter hexanoyl-CoA and 7 malonyl-CoA extender units followed by cyclization and release of norsolorinic acid. Norsolorinic acid is the first stable intermediate in the biosynthesis of sterigmatocystin and is converted into averantin (AVN) by the ketoreductase stcE which reduces the hexanoate ketone to an alcohol. Averantin is then oxidized into 5'-hydroxyaverantin (HAVN) by the cytochrome P450 monooxygenase stcF. 5'-hydroxyaverantin is further converted to 5'-oxyaverantin (OAVN) by the 5'-hydroxyaverantin dehydrogenase stcG. The next step is the conversion of OAVN into averufin (AVF) which is catalyzed by a yet to be identified enzyme. The cytochrome P450 monooxygenase stcB and the flavin-binding monooxygenase stcW are both required for the conversion of averufin to 1-hydroxyversicolorone. The esterase stcI probably catalyzes the formation of versiconal hemiacetal acetate from 1-hydroxyversicolorone. The oxydoreductase stcN then probably catalyzes the biosynthetic step from versiconal to versicolorin B (VERB). The next step is performed by the versicolorin B desaturase stcL to produce versicolorin A (VERA). The ketoreductase stcU and the cytochrome P450 monooxygenase stcS are involved in the conversion of versicolorin A to demethylsterigmatocystin. The Baeyer-Villiger oxidas stcQ and the reductase stcR might be involved in the biosynthetic step from versicolorin A to demethylsterigmatocystin. The final step in the biosynthesis of sterigmatocystin is the methylation of demethylsterigmatocystin catalyzed by the methyltransferase stcP. The chain is Norsolorinic acid reductase stcV from Emericella nidulans (strain FGSC A4 / ATCC 38163 / CBS 112.46 / NRRL 194 / M139) (Aspergillus nidulans).